Here is a 417-residue protein sequence, read N- to C-terminus: MSLVLKKSIDDATVRDKKVLIRVDFNVPVKNGKITNDFRIRSALPTIQKVLKEGGSCILMSHLGRPKGARMSDPSPEKGVRGYEEAATLRPVAARISELLGQKVEFAPDCLDAASYASKLKNADVLLLENVRFYAEEGSKKEEERDAMAKVLASYGDVYVSDAFGTAHRDSATMTGIPKVLGAGYAGYLMEKEINYFSRVLNNPPRPLVAIVGGAKVSDKIQLLDNMLGRINYLVIGGAMAYTFQKAQGRKIGISMCEEDKLDLAKSLLKKAQERNVQVFLPVDHVCNKEFKAADSPLVTESVDVPDGYMALDIGPRTIHMYEEVIGRCKSAIWNGPMGVFEMPCYSKGTFAVAKAMGTGTQKNGLMSIIGGGDSASAAELSGEAKNMSHVSTGGGASLELLEGKTLPGVAILTDRE.

(2R)-3-phosphoglycerate-binding residues include Val23, Asp24, Phe25, Asn26, Arg39, Ser61, His62, Gly64, Arg65, Arg132, His168, and Arg169. Residues Gly214 and Ala215 each contribute to the ADP site. Gly214 contributes to the CDP binding site. AMP-binding residues include Ala215 and Lys216. Position 215 (Ala215) interacts with ATP. Mg(2+) is bound at residue Ala215. Lys216 is a binding site for (2R)-3-phosphoglycerate. CDP is bound at residue Asp219. Mg(2+) is bound at residue Asp219. 2 residues coordinate ADP: Lys220 and Gly238. Residue Lys220 participates in AMP binding. Residue Lys220 participates in ATP binding. Gly238 contributes to the CDP binding site. AMP contacts are provided by Ala239 and Ala311. Residues Ala239 and Ala311 each contribute to the ATP site. 2 residues coordinate ADP: Ala311 and Asn335. The CDP site is built by Gly336 and Phe341. Phe341, Glu342, Asp374, and Ser375 together coordinate ADP. Residue Glu342 coordinates AMP. The ATP site is built by Glu342, Asp374, and Ser375. Residue Asp374 participates in Mg(2+) binding.

This sequence belongs to the phosphoglycerate kinase family. As to quaternary structure, monomer. It depends on Mg(2+) as a cofactor.

It is found in the cytoplasm. The enzyme catalyses (2R)-3-phosphoglycerate + ATP = (2R)-3-phospho-glyceroyl phosphate + ADP. It functions in the pathway carbohydrate degradation; glycolysis; pyruvate from D-glyceraldehyde 3-phosphate: step 2/5. This Leishmania major protein is Phosphoglycerate kinase, cytosolic (PGKB).